We begin with the raw amino-acid sequence, 82 residues long: Putative membrane protein insertion efficiency factor (82 aa).

The protein belongs to the UPF0161 family.

It is found in the cell inner membrane. Its function is as follows. Could be involved in insertion of integral membrane proteins into the membrane. This Synechococcus elongatus (strain ATCC 33912 / PCC 7942 / FACHB-805) (Anacystis nidulans R2) protein is Putative membrane protein insertion efficiency factor.